We begin with the raw amino-acid sequence, 122 residues long: High-potential iron-sulfur protein (122 aa).

The N-terminal stretch at 1–37 is a signal peptide; it reads MSDKPISKSRRDAVKVMLGTAAAIPMINLVGFGTARA. 4 residues coordinate [4Fe-4S] cluster: C80, C83, C100, and C114.

Belongs to the high-potential iron-sulfur protein (HiPIP) family. As to quaternary structure, homodimer.

The protein resides in the periplasm. Its function is as follows. Specific class of high-redox-potential 4Fe-4S ferredoxins. Functions in anaerobic electron transport in most purple and in some other photosynthetic bacteria and in at least one genus (Paracoccus) of halophilic, denitrifying bacteria. The chain is High-potential iron-sulfur protein (hip) from Allochromatium vinosum (strain ATCC 17899 / DSM 180 / NBRC 103801 / NCIMB 10441 / D) (Chromatium vinosum).